A 152-amino-acid chain; its full sequence is Ribonuclease pancreatic beta-type (152 aa).

An N-terminal signal peptide occupies residues 1-25 (MGLEKSFILFSLLVLVLGWVQPSLG). Residues 31–45 (SSADKFKRQHMDPES) show a composition bias toward basic and acidic residues. Residues 31–53 (SSADKFKRQHMDPESPSKSSPTY) are disordered. Residues Lys-35 and Arg-38 each coordinate substrate. The Proton acceptor role is filled by His-40. 4 disulfide bridges follow: Cys-54/Cys-112, Cys-68/Cys-123, Cys-86/Cys-138, and Cys-93/Cys-100. Substrate contacts are provided by residues 69–73 (KPVNT), Lys-94, and Arg-113. The active-site Proton donor is His-147.

Belongs to the pancreatic ribonuclease family. Monomer.

The protein resides in the secreted. It carries out the reaction an [RNA] containing cytidine + H2O = an [RNA]-3'-cytidine-3'-phosphate + a 5'-hydroxy-ribonucleotide-3'-[RNA].. It catalyses the reaction an [RNA] containing uridine + H2O = an [RNA]-3'-uridine-3'-phosphate + a 5'-hydroxy-ribonucleotide-3'-[RNA].. In terms of biological role, endonuclease that catalyzes the cleavage of RNA on the 3' side of pyrimidine nucleotides. Acts on single-stranded and double-stranded RNA. This Rattus exulans (Polynesian rat) protein is Ribonuclease pancreatic beta-type.